Consider the following 217-residue polypeptide: Fucoxanthin-chlorophyll a-c binding protein B, chloroplastic (217 aa).

Residues 1–39 constitute a chloroplast transit peptide; that stretch reads MKSAVMAVACAAAPGFRGPSAFNGAALTTSAKACSAMKM. Helical transmembrane passes span 81–101, 122–142, and 183–203; these read IAML…PGML, IPPA…LAVM, and GRAA…NNKP.

The protein belongs to the fucoxanthin chlorophyll protein family. As to quaternary structure, the LHC complex of chromophytic algae is composed of fucoxanthin, chlorophyll A and C bound non-covalently by fucoxanthin chlorophyll proteins (FCPs). The ratio of pigments in this LHC is; fucoxanthin: chlorophyll C: chlorophyll A; (0.6-1): (0.1-0.3): (1).

It localises to the plastid. The protein localises to the chloroplast thylakoid membrane. Functionally, the light-harvesting complex (LHC) functions as a light receptor, it captures and delivers excitation energy to photosystems with which it is closely associated. Energy is transferred from the carotenoid and chlorophyll C (or B) to chlorophyll A and the photosynthetic reaction centers where it is used to synthesize ATP and reducing power. The chain is Fucoxanthin-chlorophyll a-c binding protein B, chloroplastic (FCPB) from Macrocystis pyrifera (Giant kelp).